A 674-amino-acid chain; its full sequence is Kelch repeat and BTB domain-containing protein 6 (674 aa).

Positions 1–28 (MQSREDAPRSRRLASPRGGKRPKKIHKP) are disordered. A compositionally biased stretch (basic residues) spans 10-27 (SRRLASPRGGKRPKKIHK). The region spanning 63–138 (CDVTIEVVTP…CYTGRVSLSE (76 aa)) is the BTB domain. Kelch repeat units lie at residues 386 to 435 (AVCI…YLNG), 436 to 484 (YIYI…VIRD), 486 to 523 (LYAL…VFNE), 524 to 564 (EIYC…IIKH), 567 to 616 (KLLL…CLSA), and 642 to 673 (TEWD…RVAP). The tract at residues 631 to 674 (TEEEEIPSESSTEWDLGGFSEPDSESGSSSSLSDDDFWVRVAPQ) is disordered. The ATG8 interaction motif (AIM) motif lies at 668–671 (WVRV).

Core component of a BCR3 (BTB-CUL3-RBX1) E3 ubiquitin ligase complex, also named Cul3-RING ubiquitin ligase complex CUL3(KBTBD6/7), composed of CUL3, RBX1, KBTBD6 and KBTBD7. Interacts with GABARAP; the interaction is direct and is required for the ubiquitination of TIAM1. Interacts with GABARAPL1, GABARAPL2 and MAP1LC3B; the interaction is direct.

The protein localises to the cytoplasm. Its subcellular location is the nucleus. Its pathway is protein modification; protein ubiquitination. Functionally, as part of the CUL3(KBTBD6/7) E3 ubiquitin ligase complex functions as a substrate adapter for the RAC1 guanine exchange factor (GEF) TIAM1, mediating its 'Lys-48' ubiquitination and proteasomal degradation. By controlling this ubiquitination, regulates RAC1 signal transduction and downstream biological processes including the organization of the cytoskeleton, cell migration and cell proliferation. Ubiquitination of TIAM1 requires the membrane-associated protein GABARAP which may restrict locally the activity of the complex. This is Kelch repeat and BTB domain-containing protein 6 from Homo sapiens (Human).